The following is a 321-amino-acid chain: Glycolipid transfer protein domain-containing protein 2 (321 aa).

Belongs to the GLTP family.

The sequence is that of Glycolipid transfer protein domain-containing protein 2 (Gltpd2) from Mus musculus (Mouse).